Here is a 324-residue protein sequence, read N- to C-terminus: Olfactory receptor 1L3 (324 aa).

The Extracellular portion of the chain corresponds to M1 to R25. N5 carries N-linked (GlcNAc...) asparagine glycosylation. The chain crosses the membrane as a helical span at residues P26–I49. Residues H50–N57 are Cytoplasmic-facing. Residues P58 to P79 form a helical membrane-spanning segment. Over K80–Q100 the chain is Extracellular. A disulfide bond links C97 and C189. A helical membrane pass occupies residues M101 to I120. Residues N121–R139 are Cytoplasmic-facing. Residues C140–L158 traverse the membrane as a helical segment. Topologically, residues H159–E196 are extracellular. A helical membrane pass occupies residues I197–L219. The Cytoplasmic segment spans residues R220–K236. A helical membrane pass occupies residues A237–Y259. At L260–R271 the chain is on the extracellular side. A helical membrane pass occupies residues I272–L291. Over R292–P324 the chain is Cytoplasmic.

This sequence belongs to the G-protein coupled receptor 1 family.

It is found in the cell membrane. Its function is as follows. Odorant receptor. The chain is Olfactory receptor 1L3 (OR1L3) from Homo sapiens (Human).